The primary structure comprises 272 residues: MDMKRRIHLELRNRTPAAVRELVLDNCKAMDGKIEGLTDEFVNLEFLSLISVGLFSVSDLPKLPKLKKLELSENRIFGGLDRLAEELPSLTHLNLSGNNLKDISTLEPLKRLDCLKSLDLFGCEVTNRSDYRETVFRLLPQLSYLDGYDREDQEAPDSDVEVDSVEEAPDSDGEVDGVDKEEEDEEGEDEEEEEDEDGEEEEDEDEEDEDEDEDVEGEDDEDEVSGEEEEFGHDGEVDEDEEDEDEDEDEEEEESGKGEKRKRETDDEGEDD.

LRR repeat units lie at residues 18–38 (AVRE…EGLT), 43–64 (NLEF…PKLP), 65–87 (KLKK…AEEL), and 89–110 (SLTH…EPLK). Residues 123–161 (CEVTNRSDYRETVFRLLPQLSYLDGYDREDQEAPDSDVE) form the LRRCT domain. Positions 149-254 (DREDQEAPDS…DEDEDEEEEE (106 aa)) are enriched in acidic residues. Residues 149 to 272 (DREDQEAPDS…RETDDEGEDD (124 aa)) form a disordered region. Phosphoserine occurs at positions 164 and 171. Residues 255–265 (SGKGEKRKRET) show a composition bias toward basic and acidic residues. A Nuclear localization signal motif is present at residues 260–263 (KRKR). T265 carries the post-translational modification Phosphothreonine.

Belongs to the ANP32 family. As to quaternary structure, interacts with histones H3 and H4. Interacts with KLF5; this interaction induces promoter region-specific histone incorporation and inhibition of histone acetylation by ANP32B. Post-translationally, some glutamate residues are glycylated by TTLL8. This modification occurs exclusively on glutamate residues and results in a glycine chain on the gamma-carboxyl group. Directly cleaved by caspase-3/CASP3.

The protein localises to the nucleus. In terms of biological role, multifunctional protein that is involved in the regulation of many processes including cell proliferation, apoptosis, cell cycle progression or transcription. Regulates the proliferation of neuronal stem cells, differentiation of leukemic cells and progression from G1 to S phase of the cell cycle. As negative regulator of caspase-3-dependent apoptosis, may act as an antagonist of ANP32A in regulating tissue homeostasis. Exhibits histone chaperone properties, able to recruit histones to certain promoters, thus regulating the transcription of specific genes. Also plays an essential role in the nucleocytoplasmic transport of specific mRNAs via the uncommon nuclear mRNA export receptor XPO1/CRM1. Participates in the regulation of adequate adaptive immune responses by acting on mRNA expression and cell proliferation. The protein is Acidic leucine-rich nuclear phosphoprotein 32 family member B (Anp32b) of Mus musculus (Mouse).